Consider the following 637-residue polypeptide: Formate--tetrahydrofolate ligase (637 aa).

81-88 (TPLGEGKS) is an ATP binding site.

This sequence belongs to the formate--tetrahydrofolate ligase family. In terms of assembly, homodimer.

The catalysed reaction is (6S)-5,6,7,8-tetrahydrofolate + formate + ATP = (6R)-10-formyltetrahydrofolate + ADP + phosphate. Its pathway is one-carbon metabolism; tetrahydrofolate interconversion. This chain is Formate--tetrahydrofolate ligase, found in Spinacia oleracea (Spinach).